Reading from the N-terminus, the 316-residue chain is Peroxidase 31 (316 aa).

Positions 1-19 (MASLKSLFLLFLFFFTAQS) are cleaved as a signal peptide. Intrachain disulfides connect C30–C111, C63–C68, C117–C312, and C196–C222. H61 serves as the catalytic Proton acceptor. Residues D62, G67, D69, and S71 each contribute to the Ca(2+) site. P159 contacts substrate. Residue H189 coordinates heme b. Residue S190 participates in Ca(2+) binding. Residue N206 is glycosylated (N-linked (GlcNAc...) asparagine). Residues D236, T239, and D244 each coordinate Ca(2+).

This sequence belongs to the peroxidase family. Classical plant (class III) peroxidase subfamily. It depends on heme b as a cofactor. Ca(2+) is required as a cofactor.

The protein localises to the secreted. The enzyme catalyses 2 a phenolic donor + H2O2 = 2 a phenolic radical donor + 2 H2O. In terms of biological role, removal of H(2)O(2), oxidation of toxic reductants, biosynthesis and degradation of lignin, suberization, auxin catabolism, response to environmental stresses such as wounding, pathogen attack and oxidative stress. These functions might be dependent on each isozyme/isoform in each plant tissue. The polypeptide is Peroxidase 31 (PER31) (Arabidopsis thaliana (Mouse-ear cress)).